The primary structure comprises 176 residues: RNA pyrophosphohydrolase (176 aa).

Positions 6–149 (GYRPNVGIVI…KRDVYRRVMK (144 aa)) constitute a Nudix hydrolase domain. The Nudix box motif lies at 38–59 (GGINPGESAEQAMYRELFEEVG).

Belongs to the Nudix hydrolase family. RppH subfamily. A divalent metal cation serves as cofactor.

Functionally, accelerates the degradation of transcripts by removing pyrophosphate from the 5'-end of triphosphorylated RNA, leading to a more labile monophosphorylated state that can stimulate subsequent ribonuclease cleavage. The protein is RNA pyrophosphohydrolase of Shigella boydii serotype 4 (strain Sb227).